We begin with the raw amino-acid sequence, 473 residues long: Ribulose bisphosphate carboxylase large chain (473 aa).

The substrate site is built by Asn-116 and Thr-166. The Proton acceptor role is filled by Lys-168. Residue Lys-170 coordinates substrate. Mg(2+) contacts are provided by Lys-194, Asp-196, and Glu-197. The residue at position 194 (Lys-194) is an N6-carboxylysine. The active-site Proton acceptor is His-287. Arg-288, His-320, and Ser-372 together coordinate substrate.

Belongs to the RuBisCO large chain family. Type I subfamily. Heterohexadecamer of 8 large chains and 8 small chains. Mg(2+) serves as cofactor.

The enzyme catalyses 2 (2R)-3-phosphoglycerate + 2 H(+) = D-ribulose 1,5-bisphosphate + CO2 + H2O. It carries out the reaction D-ribulose 1,5-bisphosphate + O2 = 2-phosphoglycolate + (2R)-3-phosphoglycerate + 2 H(+). Functionally, ruBisCO catalyzes two reactions: the carboxylation of D-ribulose 1,5-bisphosphate, the primary event in carbon dioxide fixation, as well as the oxidative fragmentation of the pentose substrate. Both reactions occur simultaneously and in competition at the same active site. The chain is Ribulose bisphosphate carboxylase large chain from Nitrobacter winogradskyi (Nitrobacter agilis).